The chain runs to 448 residues: Trigger factor (448 aa).

Positions 172-257 (GDRVTVDFVG…MKKVEWPHLP (86 aa)) constitute a PPIase FKBP-type domain.

It belongs to the FKBP-type PPIase family. Tig subfamily.

The protein resides in the cytoplasm. It carries out the reaction [protein]-peptidylproline (omega=180) = [protein]-peptidylproline (omega=0). Its function is as follows. Involved in protein export. Acts as a chaperone by maintaining the newly synthesized protein in an open conformation. Functions as a peptidyl-prolyl cis-trans isomerase. The polypeptide is Trigger factor (Burkholderia multivorans (strain ATCC 17616 / 249)).